Consider the following 149-residue polypeptide: Natriuretic peptides A (149 aa).

The signal sequence occupies residues 1–23 (MGSPIAASFLLFLAVQLLGQTGA). 2 consecutive propeptides follow at residues 24 to 121 (NPVY…AAPR) and 91 to 101 (DGGALGRSPWD). The interval 49 to 103 (MPLEDEAESPQALSEQNAEAGAALSPLPEVPPWTGEVSPAQRDGGALGRSPWDSS) is disordered. Phosphoserine is present on Ser-127. Cys-128 and Cys-144 are oxidised to a cystine. The important for degradation of atrial natriuretic peptide by IDE stretch occupies residues 145–149 (NSFRY).

This sequence belongs to the natriuretic peptide family. Homodimer; disulfide-linked antiparallel dimer. The precursor molecule is proteolytically cleaved by CORIN at Arg-121 to produce the atrial natriuretic peptide. Undergoes further proteolytic cleavage by unknown proteases to give rise to long-acting natriuretic peptide, vessel dilator and kaliuretic peptide. Additional processing gives rise to the auriculin and atriopeptin peptides. In the kidneys, alternative processing by an unknown protease results in the peptide urodilatin. In terms of processing, cleavage by MME initiates degradation of the factor and thereby regulates its activity. Degradation by IDE results in reduced activation of NPR1 (in vitro). During IDE degradation, the resulting products can temporarily stimulate NPR2 to produce cGMP, before the fragments are completely degraded and inactivated by IDE (in vitro). Post-translationally, degraded by IDE. Phosphorylation on Ser-127 decreases vasorelaxant activity.

It is found in the secreted. It localises to the perikaryon. Its subcellular location is the cell projection. Hormone that plays a key role in mediating cardio-renal homeostasis, and is involved in vascular remodeling and regulating energy metabolism. Acts by specifically binding and stimulating NPR1 to produce cGMP, which in turn activates effector proteins, such as PRKG1, that drive various biological responses. Regulates vasodilation, natriuresis, diuresis and aldosterone synthesis and is therefore essential for regulating blood pressure, controlling the extracellular fluid volume and maintaining the fluid-electrolyte balance. Also involved in inhibiting cardiac remodeling and cardiac hypertrophy by inducing cardiomyocyte apoptosis and attenuating the growth of cardiomyocytes and fibroblasts. Plays a role in female pregnancy by promoting trophoblast invasion and spiral artery remodeling in uterus, and thus prevents pregnancy-induced hypertension. In adipose tissue, acts in various cGMP- and PKG-dependent pathways to regulate lipid metabolism and energy homeostasis. This includes up-regulating lipid metabolism and mitochondrial oxygen utilization by activating the AMP-activated protein kinase (AMPK), and increasing energy expenditure by acting via MAPK11 to promote the UCP1-dependent thermogenesis of brown adipose tissue. Binds the clearance receptor NPR3 which removes the hormone from circulation. Its function is as follows. May have a role in cardio-renal homeostasis through regulation of natriuresis, diuresis, vasodilation, and inhibiting aldosterone synthesis. In vitro, promotes the production of cGMP and induces vasodilation. May promote natriuresis, at least in part, by enhancing prostaglandin E2 synthesis resulting in the inhibition of renal Na+-K+-ATPase. However reports on the involvement of this peptide in mammal blood volume and blood pressure homeostasis are conflicting; according to a report, in vivo it is not sufficient to activate cGMP and does not inhibit collecting duct transport nor effect diuresis and natriuresis. Appears to bind to specific receptors that are distinct from the receptors bound by atrial natriuretic peptide and vessel dilator. Possibly enhances protein excretion in urine by decreasing proximal tubular protein reabsorption. In terms of biological role, may have a role in cardio-renal homeostasis through regulation of natriuresis, diuresis, and vasodilation. In vitro, promotes the production of cGMP and induces vasodilation. May promote natriuresis, at least in part, by enhancing prostaglandin E2 synthesis resulting in the inhibition of renal Na+-K+-ATPase. However reports on the involvement of this peptide in mammal blood volume and blood pressure homeostasis are conflicting; according to a report it is not sufficient to activate cGMP and does not inhibit collecting duct transport nor effect diuresis and natriuresis. Appears to bind to specific receptors that are distinct from the receptors bound by the atrial natriuretic and long-acting natriuretic peptides. Possibly functions in protein excretion in urine by maintaining the integrity of the proximal tubules and enhancing protein excretion by decreasing proximal tubular protein reabsorption. Functionally, may have a role in cardio-renal homeostasis through regulation of diuresis and inhibiting aldosterone synthesis. In vitro, promotes the production of cGMP and induces vasodilation. May promote natriuresis, at least in part, by enhancing prostaglandin E2 synthesis resulting in the inhibition of renal Na+-K+-ATPase. May have a role in potassium excretion but not sodium excretion (natriuresis). Possibly enhances protein excretion in urine by decreasing proximal tubular protein reabsorption. Hormone produced in the kidneys that appears to be important for maintaining cardio-renal homeostasis. Mediates vasodilation, natriuresis and diuresis primarily in the renal system, in order to maintain the extracellular fluid volume and control the fluid-electrolyte balance. Specifically binds and stimulates cGMP production by renal transmembrane receptors, likely NPR1. Urodilatin not ANP, may be the natriuretic peptide responsible for the regulation of sodium and water homeostasis in the kidney. Its function is as follows. May have a role in cardio-renal homeostasis through regulation of natriuresis and vasodilation. In vivo promotes natriuresis and in vitro, vasodilates renal artery strips. In terms of biological role, may have a role in cardio-renal homeostasis through regulation of regulation of natriuresis and vasodilation. In vivo promotes natriuresis. In vitro, vasodilates intestinal smooth muscle but not smooth muscle strips. Functionally, may have a role in cardio-renal homeostasis through regulation of natriuresis and vasodilation. In vivo promotes natriuresis. In vitro, selectively vasodilates intestinal and vascular smooth muscle strips. May have a role in cardio-renal homeostasis through regulation of natriuresis and vasodilation. In vivo promotes natriuresis. In vitro, selectively vasodilates intestinal smooth muscle but not vascular smooth muscle strips. The polypeptide is Natriuretic peptides A (NPPA) (Canis lupus familiaris (Dog)).